The chain runs to 476 residues: Bifunctional protein HldE (476 aa).

Residues 1–319 are ribokinase; sequence MKVTLPAFEK…EALKSHQGES (319 aa). 195 to 198 is an ATP binding site; the sequence is NMSE. Asp264 is a catalytic residue. Residues 345 to 476 form a cytidylyltransferase region; that stretch reads MTNGCFDILH…AIIQNIMSRH (132 aa).

The protein in the N-terminal section; belongs to the carbohydrate kinase PfkB family. It in the C-terminal section; belongs to the cytidylyltransferase family. As to quaternary structure, homodimer.

It carries out the reaction D-glycero-beta-D-manno-heptose 7-phosphate + ATP = D-glycero-beta-D-manno-heptose 1,7-bisphosphate + ADP + H(+). The enzyme catalyses D-glycero-beta-D-manno-heptose 1-phosphate + ATP + H(+) = ADP-D-glycero-beta-D-manno-heptose + diphosphate. The protein operates within nucleotide-sugar biosynthesis; ADP-L-glycero-beta-D-manno-heptose biosynthesis; ADP-L-glycero-beta-D-manno-heptose from D-glycero-beta-D-manno-heptose 7-phosphate: step 1/4. It functions in the pathway nucleotide-sugar biosynthesis; ADP-L-glycero-beta-D-manno-heptose biosynthesis; ADP-L-glycero-beta-D-manno-heptose from D-glycero-beta-D-manno-heptose 7-phosphate: step 3/4. In terms of biological role, catalyzes the phosphorylation of D-glycero-D-manno-heptose 7-phosphate at the C-1 position to selectively form D-glycero-beta-D-manno-heptose-1,7-bisphosphate. Its function is as follows. Catalyzes the ADP transfer from ATP to D-glycero-beta-D-manno-heptose 1-phosphate, yielding ADP-D-glycero-beta-D-manno-heptose. In Shewanella amazonensis (strain ATCC BAA-1098 / SB2B), this protein is Bifunctional protein HldE.